A 166-amino-acid chain; its full sequence is Small ribosomal subunit protein uS5 (166 aa).

One can recognise an S5 DRBM domain in the interval 10–73 (QIEKLISLNR…TSARKNLRFV (64 aa)).

This sequence belongs to the universal ribosomal protein uS5 family. As to quaternary structure, part of the 30S ribosomal subunit. Contacts proteins S4 and S8.

Functionally, with S4 and S12 plays an important role in translational accuracy. Located at the back of the 30S subunit body where it stabilizes the conformation of the head with respect to the body. The chain is Small ribosomal subunit protein uS5 from Borrelia garinii subsp. bavariensis (strain ATCC BAA-2496 / DSM 23469 / PBi) (Borreliella bavariensis).